The following is a 94-amino-acid chain: Integration host factor subunit beta (94 aa).

It belongs to the bacterial histone-like protein family. Heterodimer of an alpha and a beta chain.

Functionally, this protein is one of the two subunits of integration host factor, a specific DNA-binding protein that functions in genetic recombination as well as in transcriptional and translational control. This Brucella abortus (strain S19) protein is Integration host factor subunit beta.